The primary structure comprises 288 residues: Quinate/shikimate dehydrogenase (288 aa).

The substrate site is built by Lys-71 and Asp-107. NAD(+)-binding positions include 132 to 135 (AGGA), 155 to 158 (NRRD), Lys-205, 232 to 235 (CVYN), and Gly-255.

This sequence belongs to the shikimate dehydrogenase family. In terms of assembly, homodimer.

The enzyme catalyses L-quinate + NAD(+) = 3-dehydroquinate + NADH + H(+). The catalysed reaction is L-quinate + NADP(+) = 3-dehydroquinate + NADPH + H(+). It catalyses the reaction shikimate + NADP(+) = 3-dehydroshikimate + NADPH + H(+). It carries out the reaction shikimate + NAD(+) = 3-dehydroshikimate + NADH + H(+). It participates in metabolic intermediate biosynthesis; chorismate biosynthesis; chorismate from D-erythrose 4-phosphate and phosphoenolpyruvate: step 4/7. In terms of biological role, the actual biological function of YdiB remains unclear, nor is it known whether 3-dehydroshikimate or quinate represents the natural substrate. Catalyzes the reversible NAD-dependent reduction of both 3-dehydroshikimate (DHSA) and 3-dehydroquinate to yield shikimate (SA) and quinate, respectively. It can use both NAD or NADP for catalysis, however it has higher catalytic efficiency with NAD. In Escherichia coli O17:K52:H18 (strain UMN026 / ExPEC), this protein is Quinate/shikimate dehydrogenase.